A 213-amino-acid chain; its full sequence is Large ribosomal subunit protein uL3 (213 aa).

Belongs to the universal ribosomal protein uL3 family. In terms of assembly, part of the 50S ribosomal subunit. Forms a cluster with proteins L14 and L19.

Functionally, one of the primary rRNA binding proteins, it binds directly near the 3'-end of the 23S rRNA, where it nucleates assembly of the 50S subunit. The polypeptide is Large ribosomal subunit protein uL3 (Desulforudis audaxviator (strain MP104C)).